The primary structure comprises 535 residues: Pescadillo homolog (535 aa).

A BRCT domain is found at 314 to 406 (KRKQLFANYR…SCLSIKKYLP (93 aa)).

This sequence belongs to the pescadillo family.

It localises to the nucleus. Its subcellular location is the nucleolus. The protein localises to the nucleoplasm. In terms of biological role, required for maturation of ribosomal RNAs and formation of the large ribosomal subunit. This chain is Pescadillo homolog, found in Brugia malayi (Filarial nematode worm).